A 273-amino-acid polypeptide reads, in one-letter code: Short-chain dehydrogenase fogB (273 aa).

NADP(+) is bound by residues I16, D66, R128, Y174, K178, V207, and T209. Residue Y174 is the Proton donor of the active site. The active-site Lowers pKa of active site Tyr is the K178.

Belongs to the short-chain dehydrogenases/reductases (SDR) family.

Short-chain dehydrogenase; part of the gene cluster that mediates the biosynthesis of flavoglaucin and congeners (including aspergin, dihydroauroglaucin and auroglaucin), prenylated salicylaldehyde derivatives carrying a saturated or an unsaturated C-7 side chain. The PKS fogA releases the carboxylic acid (8E,10E,12E)-3,5,7-trihydroxytetradeca-8,10,12-trienoic acid as its product, as well as derivatives with one and two double bonds. FogA is indeed able to reduce the initial triketide, thus being at least partially responsible for the differently saturated heptyl side chains of flavoglaucin congeners. The oxidoreductases fogB, fogC and fogD modify the nascent polyketide in fogA-bound form and, together, fogA, fogB, fogC and fogD are necessary for the formation of the aromatic core and the cyclized PKS products are released as salicyl alcohols. In particular, fogB is responsible for oxidation of a hydroxyl group or reduction of remaining double bond(s) at the C-7 residue whereas fogD is probably involved in the reductive release of the modified PKS products. The cytochrome P450 monooxygenase fogE is then responsible for the hydroxylation at C-3 of the benzene ring. The fogE products are substrates of the prenyltransferase fogH and the prenylated benzyl alcohols are subsequently oxidized by the fogF to produce the final aryl aldehydes flavoglaucin and congeners. The short-chain dehydrogenase fogG does not seem to be involved in the biosynthesis of the prenylated salicylaldehyde derivatives. The polypeptide is Short-chain dehydrogenase fogB (Aspergillus ruber (strain CBS 135680)).